The chain runs to 873 residues: Bifunctional uridylyltransferase/uridylyl-removing enzyme (873 aa).

Residues 1–332 (MPYQCPITFN…NGGQTQEAEI (332 aa)) are uridylyltransferase. Residues 333 to 692 (LDNDFQRRGS…ISKKATRGGT (360 aa)) form a uridylyl-removing region. Residues 451–573 (VDEHSIRLLK…VRDEESLELL (123 aa)) form the HD domain. 2 ACT domains span residues 693-777 (EVFV…RTPR) and 800-873 (LMEL…ELAP).

It belongs to the GlnD family. Mg(2+) is required as a cofactor.

The catalysed reaction is [protein-PII]-L-tyrosine + UTP = [protein-PII]-uridylyl-L-tyrosine + diphosphate. It catalyses the reaction [protein-PII]-uridylyl-L-tyrosine + H2O = [protein-PII]-L-tyrosine + UMP + H(+). Uridylyltransferase (UTase) activity is inhibited by glutamine, while glutamine activates uridylyl-removing (UR) activity. Functionally, modifies, by uridylylation and deuridylylation, the PII regulatory proteins (GlnB and homologs), in response to the nitrogen status of the cell that GlnD senses through the glutamine level. Under low glutamine levels, catalyzes the conversion of the PII proteins and UTP to PII-UMP and PPi, while under higher glutamine levels, GlnD hydrolyzes PII-UMP to PII and UMP (deuridylylation). Thus, controls uridylylation state and activity of the PII proteins, and plays an important role in the regulation of nitrogen assimilation and metabolism. The polypeptide is Bifunctional uridylyltransferase/uridylyl-removing enzyme (Vibrio atlanticus (strain LGP32) (Vibrio splendidus (strain Mel32))).